Here is a 484-residue protein sequence, read N- to C-terminus: Polyamine oxidase 3 (484 aa).

Residues Glu-47, Arg-55, Val-236, and Glu-423 each contribute to the FAD site. Residues 482 to 484 (SRL) carry the Microbody targeting signal motif.

This sequence belongs to the flavin monoamine oxidase family. The cofactor is FAD. In terms of tissue distribution, widely expressed.

The protein resides in the peroxisome. It catalyses the reaction spermine + O2 + H2O = 3-aminopropanal + spermidine + H2O2. The catalysed reaction is N(1)-acetylspermine + O2 + H2O = 3-acetamidopropanal + spermidine + H2O2. The enzyme catalyses norspermine + O2 + H2O = norspermidine + 3-aminopropanal + H2O2. It carries out the reaction spermidine + O2 + H2O = 3-aminopropanal + putrescine + H2O2. It catalyses the reaction thermospermine + O2 + H2O = 3-aminopropanal + spermidine + H2O2. Its pathway is amine and polyamine degradation; spermine degradation. It functions in the pathway amine and polyamine degradation; spermidine degradation. Functionally, flavoenzyme involved in polyamine back-conversion. Catalyzes the oxidation of the secondary amino group of polyamines, such as spermine, spermidine and their acetyl derivatives. Substrate preference is spermidine &gt; norspermine &gt; thermospermine &gt; N(1)-acetylspermine &gt; spermine. No activity detected when putrescine is used as substrate. Plays an important role in the regulation of polyamine intracellular concentration. The protein is Polyamine oxidase 3 of Oryza sativa subsp. japonica (Rice).